The following is a 201-amino-acid chain: 3-isopropylmalate dehydratase small subunit (201 aa).

This sequence belongs to the LeuD family. LeuD type 1 subfamily. Heterodimer of LeuC and LeuD.

The enzyme catalyses (2R,3S)-3-isopropylmalate = (2S)-2-isopropylmalate. The protein operates within amino-acid biosynthesis; L-leucine biosynthesis; L-leucine from 3-methyl-2-oxobutanoate: step 2/4. Its function is as follows. Catalyzes the isomerization between 2-isopropylmalate and 3-isopropylmalate, via the formation of 2-isopropylmaleate. The chain is 3-isopropylmalate dehydratase small subunit from Jannaschia sp. (strain CCS1).